The following is a 57-amino-acid chain: U-Asilidin(1)-Mar2a (57 aa).

A signal peptide spans 1–24; sequence MAPLLKLNILLLIVLICFTFHANA. Disulfide bonds link Cys-28–Cys-44, Cys-35–Cys-48, and Cys-43–Cys-53.

The protein belongs to the asilidin-1 family. In terms of tissue distribution, expressed by the venom gland. Exclusively expressed in the venom thoracic glands (and not in body tissues).

The protein localises to the secreted. Its function is as follows. May act as a neurotoxin. This chain is U-Asilidin(1)-Mar2a, found in Machimus arthriticus (Breck robberfly).